The chain runs to 87 residues: Spore morphogenesis and germination protein YwcE (87 aa).

A run of 3 helical transmembrane segments spans residues 1-21 (MMDM…FIWL), 26-46 (VALS…FYAT), and 56-76 (LMII…FIIY).

This sequence belongs to the YwcE family.

It is found in the cell membrane. It localises to the spore membrane. The protein localises to the spore outer membrane. In terms of biological role, required for proper spore morphogenesis. Important for spore germination. This is Spore morphogenesis and germination protein YwcE (ywcE) from Bacillus subtilis (strain 168).